The sequence spans 466 residues: Asparagine--tRNA ligase (466 aa).

The protein belongs to the class-II aminoacyl-tRNA synthetase family. As to quaternary structure, homodimer.

It localises to the cytoplasm. It carries out the reaction tRNA(Asn) + L-asparagine + ATP = L-asparaginyl-tRNA(Asn) + AMP + diphosphate + H(+). The protein is Asparagine--tRNA ligase of Shewanella oneidensis (strain ATCC 700550 / JCM 31522 / CIP 106686 / LMG 19005 / NCIMB 14063 / MR-1).